A 211-amino-acid chain; its full sequence is ATP phosphoribosyltransferase (211 aa).

This sequence belongs to the ATP phosphoribosyltransferase family. Short subfamily. As to quaternary structure, heteromultimer composed of HisG and HisZ subunits.

It is found in the cytoplasm. It carries out the reaction 1-(5-phospho-beta-D-ribosyl)-ATP + diphosphate = 5-phospho-alpha-D-ribose 1-diphosphate + ATP. Its pathway is amino-acid biosynthesis; L-histidine biosynthesis; L-histidine from 5-phospho-alpha-D-ribose 1-diphosphate: step 1/9. In terms of biological role, catalyzes the condensation of ATP and 5-phosphoribose 1-diphosphate to form N'-(5'-phosphoribosyl)-ATP (PR-ATP). Has a crucial role in the pathway because the rate of histidine biosynthesis seems to be controlled primarily by regulation of HisG enzymatic activity. This chain is ATP phosphoribosyltransferase, found in Lacticaseibacillus casei (strain BL23) (Lactobacillus casei).